A 404-amino-acid polypeptide reads, in one-letter code: MATVTAPMNMWSVRIVNGIFVLSNKKPLNLPAHLSQLNIPYSVHFIVDSLASFGLLSSLFSLDQVKQSCALLVQHKPNDQCTVLPTCVLDLEFDITVYVRSRQRVLQPGALQLALIFIKPVNGSEMAWDVRDPPETMVGQRLYENVSQGTVKALETPDHLLLTGEAIGRSDGTYDMLFKDQKIPCMVNYSNVFASYHSPNEEILPRALEITMLGQKTARLTFRPGHECPSATVSFRAEVRPILQPKVLFSHFLNWIRVNYDCQVMPLYPEQEEVVNAHDWVRFQVNNKFLVSTAVDTPLKVFICGLGQPSFLVADPGIWNPSSTCLLTLHNISNQPVKLRTCEPVAVGLLLYCNDAHLPSRDVCFCSETGRLEWRNCVVDSSQIFSWPHATQAKSLDSPKSMDS.

This is an uncharacterized protein from Alcelaphine herpesvirus 1 (strain C500) (AlHV-1).